Consider the following 277-residue polypeptide: Putative phosphoenolpyruvate synthase regulatory protein (277 aa).

157–164 (GVSRSGKT) serves as a coordination point for ADP.

The protein belongs to the pyruvate, phosphate/water dikinase regulatory protein family. PSRP subfamily.

The enzyme catalyses [pyruvate, water dikinase] + ADP = [pyruvate, water dikinase]-phosphate + AMP + H(+). The catalysed reaction is [pyruvate, water dikinase]-phosphate + phosphate + H(+) = [pyruvate, water dikinase] + diphosphate. Its function is as follows. Bifunctional serine/threonine kinase and phosphorylase involved in the regulation of the phosphoenolpyruvate synthase (PEPS) by catalyzing its phosphorylation/dephosphorylation. The chain is Putative phosphoenolpyruvate synthase regulatory protein from Aromatoleum aromaticum (strain DSM 19018 / LMG 30748 / EbN1) (Azoarcus sp. (strain EbN1)).